Reading from the N-terminus, the 766-residue chain is MDRDLLRQSLGCHGPALLSLLRSEQQDNPHFRSLLGTAAEPARGAAPPPGAGRKEKRVDNIEIQKFISKKADLLFALSWKSDASPPSEVHDDNDNLYAVMPPLEQFMEMPSMDRRELFFRDIERGDIVIGRISSIREFGFFMVLICLGSGIVRDISHLEITALCPLRDVPSHSNHGDPLSYYQTGDIIRAGIKDIDRYHEKLAVSLYSSSLPPHMAGIKLGVITSEELPMYYRRSVELNSNSLESYENIMQSSLGFVNPGVVEFLLEKLGIDESHPPSLMRGLQSKNFSEDDFASALRKKQSASWALKCVKIGVDYFKVGRHVDAMNEYNKALEIDKQNVEALVARGALYATKGSLNKAIEDFELALENCPTHRNARKYLCQTLVERGGQLEEEEKFLNAESYYKKALTLDETFKDAEDALQKLHKYMQKSLELREKQAEKEEKQKTKKIETRAEKLRKLLKEEKRLKKKRRKSSSSSSVSSADESVSSSSSSSSSSHKRHKKSKRNRSESSRSSKRHWSRPSSGHTDQSRKDDCYPVPTNTSASFLNQKQEVEKLLEKQDRLQCPNAQVKEKERGLLTSSGEVPDDLGGRSDFYNSYKTQAGSSKTEKPYKSERHFSRRNSSDSFSRNSEDKMKASSYRRFEKDTEGRKDHSRRWEPSSVKYSTSPASSDYSWKSLEKQKKYTYSGSRDVSKHEQRYQLNTNQGERVYEKEDSCGEGNRNEAPEEMLNSKEQPDSRVKKNLPQNLLNIFNQIAEFEKEKGNKPKK.

A disordered region spans residues 35 to 55 (LGTAAEPARGAAPPPGAGRKE). In terms of domain architecture, S1 motif spans 125–207 (GDIVIGRISS…YHEKLAVSLY (83 aa)). TPR repeat units lie at residues 209–242 (SSLP…NSNS), 306–339 (ALKC…DKQN), 341–373 (EALV…CPTH), and 381–414 (CQTL…DETF). The interval 463 to 743 (EEKRLKKKRR…PDSRVKKNLP (281 aa)) is disordered. Positions 475–496 (SSSSSVSSADESVSSSSSSSSS) are enriched in low complexity. Residues 497–506 (SHKRHKKSKR) are compositionally biased toward basic residues. A compositionally biased stretch (polar residues) spans 539-550 (PTNTSASFLNQK). Over residues 551 to 562 (QEVEKLLEKQDR) the composition is skewed to basic and acidic residues. Over residues 594–605 (FYNSYKTQAGSS) the composition is skewed to polar residues. Basic and acidic residues-rich tracts occupy residues 606–616 (KTEKPYKSERH) and 629–657 (NSED…RRWE). The span at 661-673 (VKYSTSPASSDYS) shows a compositional bias: polar residues. Serine 666 carries the phosphoserine modification. Residues 707–738 (RVYEKEDSCGEGNRNEAPEEMLNSKEQPDSRV) show a composition bias toward basic and acidic residues.

Belongs to the TTC14 family.

This Mus musculus (Mouse) protein is Tetratricopeptide repeat protein 14.